The primary structure comprises 109 residues: Large ribosomal subunit protein uL23 (109 aa).

The protein belongs to the universal ribosomal protein uL23 family. Part of the 50S ribosomal subunit. Contacts protein L29, and trigger factor when it is bound to the ribosome.

Its function is as follows. One of the early assembly proteins it binds 23S rRNA. One of the proteins that surrounds the polypeptide exit tunnel on the outside of the ribosome. Forms the main docking site for trigger factor binding to the ribosome. This Haemophilus influenzae (strain PittEE) protein is Large ribosomal subunit protein uL23.